We begin with the raw amino-acid sequence, 1301 residues long: MSYKKTLISKNFFFIKALNCSVSAGYVEKTGCKLPVQFSMEIPNLIDVQRQSFYSFIEYGLKEAFQKPLRFSTTKHDLEIRFFPEGIQFRKPDFTQKQAVVLGKIYGSAVYIPVGIHSKKSSTFRIEWLFVGILPIMTRQGHFVVNGVSRVVLHQMVRNPGIYTLPIHPRTKIGTLRIVPEKGGWIHITVDKKHRVWFLTRSLRRKVSLLIFLQAVGIPFHDIFLRLEHSKILQNSFVAELGEGSARHDDVLERAGLYAHPATQEEAWQYLYSHFKEYSPYAHKNLAAKEQTAREFFYSTLWNKDKLILGHIGRQQFREKIGSIEPLENTSLTREDLLEATQALLSLMHKKRVVDEIDSLTQKRIRGCDEFLLEHLATGMKEFELFFRRKVTFLPATKSITGAENPFRSLWRQNKAVFSKTVSKSWKRFFTSGTLGQFMDQTNSLAETTHKRRLTVLGPGGISGKQTTIQIRGIHPTYYGRLCPIETPEGKNAGLVNSFTVLSVLSKYGARTLTTPFYQVYKGQVQKTLPPLRVSPRQEYKLIEAPADIQLTAWNVLPKTHLPVRKELNFHSDVATRITTQSVGILQNISVATSLIPFLEHNDANRALMGSNMQRQAVPLLKPQAPLVGTGLESRVIGDVNHSMQASKTGFITKVSSTKIQVLSPRKTKAQVSVFSHVLFSLNKKKKKSLLNSEKQSFSKNGIFFIKTLQQKSNLKNIFFSAQKALYQENSSFDLKFEAQNRLFIPKMTFSLAQNFSRKIPFLSFFLKKKKERPRNPKKFFRSSDSFVNWKHKKLHSEDFRKNKVEITTTYSLIQYQRTNQSTCFSERPILPENEWVEKGDLLADGASSSQGKLSIGQNVLVAYLPWEGYNFEDAILISQRLVDQEIFTSLHMDHYDIAVQNTQYGLERITNLIPLKISDSTRDIYKMGNLDSRGLVEIGSWVEPGDYLVGKMSPLDPKSPPLQSPHEKLYNVILQREKTSFRNTSLRVPKGVQGFVLGVQILPSQEPDVAALAEKDEILRVRVLLLQRRKIQVGDKMAGRHGNKGIVSLILPRQDMPYLPDGTPVDIVLNPLGVPSRMNVGQILECLLGLAGHFLHERYTTYLFDEQYGAEASRSLVYSKLYQASLKTRNPWVFEPHHPGKIRVFDGRTGLTFDQPITAGYAYILKLVHLVDDKIHARPTGPYSAITQQPVKGRARNGGQRLGEMEVWALQAYGAAHTLHEFFTVKSDDLDGRQQAVLNIYANKPVTTGNPESFKLILRELQALCFNFQVYEKYSYYSEYTQKTRVSIFPISFIKLEDVL.

Belongs to the RNA polymerase beta chain family. In plastids the minimal PEP RNA polymerase catalytic core is composed of four subunits: alpha, beta, beta', and beta''. When a (nuclear-encoded) sigma factor is associated with the core the holoenzyme is formed, which can initiate transcription.

It localises to the plastid. The protein resides in the chloroplast. The catalysed reaction is RNA(n) + a ribonucleoside 5'-triphosphate = RNA(n+1) + diphosphate. In terms of biological role, DNA-dependent RNA polymerase catalyzes the transcription of DNA into RNA using the four ribonucleoside triphosphates as substrates. The protein is DNA-directed RNA polymerase subunit beta of Chlorella vulgaris (Green alga).